A 247-amino-acid chain; its full sequence is Triosephosphate isomerase (247 aa).

Residues Asn-10 and Lys-12 each coordinate substrate. Residue His-94 is the Electrophile of the active site. The active-site Proton acceptor is the Glu-164.

The protein belongs to the triosephosphate isomerase family. In terms of assembly, homodimer.

It carries out the reaction D-glyceraldehyde 3-phosphate = dihydroxyacetone phosphate. It functions in the pathway carbohydrate biosynthesis; gluconeogenesis. The protein operates within carbohydrate degradation; glycolysis; D-glyceraldehyde 3-phosphate from glycerone phosphate: step 1/1. This is Triosephosphate isomerase (Tpi) from Culex tarsalis (Encephalitis mosquito).